Here is a 289-residue protein sequence, read N- to C-terminus: Probable prolyl 4-hydroxylase 10 (289 aa).

The chain crosses the membrane as a helical; Signal-anchor for type II membrane protein span at residues 20-40; that stretch reads LVFAVLIMSTFVILILLAFGI. Over 41 to 289 the chain is Lumenal; it reads LSVPSNNAGS…KWLRVHEYKV (249 aa). The region spanning 161–284 is the Fe2OG dioxygenase domain; sequence HGEGLQVLHY…KWSSTKWLRV (124 aa). Fe cation-binding residues include His-179 and Asp-181. Asn-220 carries N-linked (GlcNAc...) asparagine glycosylation. His-265 is a Fe cation binding site. Lys-275 lines the 2-oxoglutarate pocket.

Belongs to the P4HA family. It depends on Fe(2+) as a cofactor. Requires L-ascorbate as cofactor.

The protein localises to the endoplasmic reticulum membrane. The catalysed reaction is L-prolyl-[collagen] + 2-oxoglutarate + O2 = trans-4-hydroxy-L-prolyl-[collagen] + succinate + CO2. In terms of biological role, catalyzes the post-translational formation of 4-hydroxyproline in -Xaa-Pro-Gly- sequences in proline-rich peptide sequences of plant glycoproteins and other proteins. Hydroxyprolines are important constituent of many plant cell wall glycoproteins such as extensins, hydroxyproline-rich glycoproteins, lectins and arabinogalactan proteins. The chain is Probable prolyl 4-hydroxylase 10 from Arabidopsis thaliana (Mouse-ear cress).